The chain runs to 424 residues: Choline-phosphate cytidylyltransferase (424 aa).

Positions 1–70 (MANPTTGKSS…RKRRRLTKEF (70 aa)) are disordered. A compositionally biased stretch (low complexity) spans 14–24 (KLSNSSLSNLF). Ser-16 is subject to Phosphoserine. Residues 35 to 44 (ETEEQDNEDK) are compositionally biased toward acidic residues. A compositionally biased stretch (basic and acidic residues) spans 45 to 55 (DESKNQDENKD). Position 59 is a phosphothreonine (Thr-59). CTP is bound by residues 111 to 119 (VFDLFHLGH) and Lys-149. Lys-149 and Trp-178 together coordinate substrate. Residues 195 to 196 (HD), Tyr-200, and 223 to 227 (RTNGV) contribute to the CTP site. The residue at position 346 (Ser-346) is a Phosphoserine. The tract at residues 348-424 (ATEFANEFTG…LTQKKKQSAN (77 aa)) is disordered. Residues 381-398 (NSNNTNTNSDSDSNTNST) show a composition bias toward low complexity. Residue Ser-401 is modified to Phosphoserine; by CK2.

Belongs to the cytidylyltransferase family.

It localises to the membrane. The catalysed reaction is phosphocholine + CTP + H(+) = CDP-choline + diphosphate. It functions in the pathway phospholipid metabolism; phosphatidylcholine biosynthesis; phosphatidylcholine from phosphocholine: step 1/2. Functionally, catalyzes the key rate-limiting step in the CDP-choline pathway for phosphatidylcholine biosynthesis. The chain is Choline-phosphate cytidylyltransferase (PCT1) from Saccharomyces cerevisiae (strain ATCC 204508 / S288c) (Baker's yeast).